Here is a 295-residue protein sequence, read N- to C-terminus: Glycine--tRNA ligase alpha subunit (295 aa).

It belongs to the class-II aminoacyl-tRNA synthetase family. As to quaternary structure, tetramer of two alpha and two beta subunits.

It is found in the cytoplasm. It catalyses the reaction tRNA(Gly) + glycine + ATP = glycyl-tRNA(Gly) + AMP + diphosphate. This is Glycine--tRNA ligase alpha subunit from Bacillus licheniformis (strain ATCC 14580 / DSM 13 / JCM 2505 / CCUG 7422 / NBRC 12200 / NCIMB 9375 / NCTC 10341 / NRRL NRS-1264 / Gibson 46).